A 208-amino-acid polypeptide reads, in one-letter code: Putative RING finger protein 413R (208 aa).

A disordered region spans residues 1-87; it reads MDAIFYPLPI…RHWSDDDSDR (87 aa). A compositionally biased stretch (acidic residues) spans 22–71; sequence DFQEEDFQEEDFQEEDFQEEDFQEEDEDEEDEEVNEYPSDLDDEYPDSDY. The span at 72-82 shows a compositional bias: basic and acidic residues; that stretch reads YDERSDRHWSD. Positions 83 to 147 form a coiled coil; the sequence is DDSDRDLDDL…KLTTLSKNLT (65 aa). The RING-type zinc finger occupies 148 to 196; it reads CIICLTNQVQILTIPCGHLIMCNPCSLNLNNSVCTRGVNSNYEKCPKCR.

The polypeptide is Putative RING finger protein 413R (EF2) (Acheta domesticus (House cricket)).